The primary structure comprises 30 residues: Cyclotide hyen-G (30 aa).

A cross-link (cyclopeptide (Gly-Asp)) is located at residues 1–30 (GLPCGESCVYIPCISTVLGCSCSNKVCYRD). Intrachain disulfides connect Cys-4-Cys-20, Cys-8-Cys-22, and Cys-13-Cys-27.

Post-translationally, this is a cyclic peptide. In terms of tissue distribution, detected in stems (at protein level).

Its function is as follows. Probably participates in a plant defense mechanism. This is Cyclotide hyen-G from Pigea enneasperma (Spade flower).